The following is a 61-amino-acid chain: UPF0434 protein PFLU_3771 (61 aa).

This sequence belongs to the UPF0434 family.

This is UPF0434 protein PFLU_3771 from Pseudomonas fluorescens (strain SBW25).